We begin with the raw amino-acid sequence, 342 residues long: Methyltransferase ungE' (342 aa).

It belongs to the methyltransferase superfamily.

The protein operates within secondary metabolite biosynthesis. Methyltransferase; part of the gene cluster that mediates the biosynthesis of the unguisins, gamma-aminobutyric acid (GABA)-containing fungal cyclic heptapeptides with the amino acid sequence cyclo-(D-Ala1-D-Val2-L-Leu3-beta-MePhe4-D-Ala5-D-Trp6-GABA7) for unguisin H and cyclo-(D-Ala1-D-Ala2-L-Leu3-beta-MePhe4-D-Ala5-D-Trp6-GABA7) for unguisin I. Within the pathway, the methyltransferase ungE' is probably involved in the synthesis of the (2R,3R)-beta-methylphenylalanine residue incorporated by the module 4 of the nonribosomal peptide synthetase (NRPS) ungA'. The alanine racemase ungC' catalyzes the interconversion of L-alanine and D-alanine, providing the D-alanine which is accepted by the first adenylation domain of ungA'. UngA' is the main enzyme within the cluster which condenses the 7 residues using its respective 7 modules. The terminal condensation domain (Ct) is involved in cyclization with D-alanine and thereby releasing of unguisins H and I. Finally, the hydrolase ungD' catalyzes the hydrolysis between the D-tryptophan and GABA residues of unguisins H and I to produce the corresponding linear peptides. In Aspergillus campestris (strain IBT 28561), this protein is Methyltransferase ungE'.